The sequence spans 318 residues: Ribosomal RNA small subunit methyltransferase A (318 aa).

N40, V42, G67, E88, D118, and N137 together coordinate S-adenosyl-L-methionine. Residues 295–305 show a composition bias toward basic and acidic residues; it reads SADRGGTDREG. Residues 295–318 form a disordered region; the sequence is SADRGGTDREGTSPPTAGQGAPAR.

The protein belongs to the class I-like SAM-binding methyltransferase superfamily. rRNA adenine N(6)-methyltransferase family. RsmA subfamily.

The protein resides in the cytoplasm. It carries out the reaction adenosine(1518)/adenosine(1519) in 16S rRNA + 4 S-adenosyl-L-methionine = N(6)-dimethyladenosine(1518)/N(6)-dimethyladenosine(1519) in 16S rRNA + 4 S-adenosyl-L-homocysteine + 4 H(+). In terms of biological role, specifically dimethylates two adjacent adenosines (A1518 and A1519) in the loop of a conserved hairpin near the 3'-end of 16S rRNA in the 30S particle. May play a critical role in biogenesis of 30S subunits. In Mycolicibacterium paratuberculosis (strain ATCC BAA-968 / K-10) (Mycobacterium paratuberculosis), this protein is Ribosomal RNA small subunit methyltransferase A.